The sequence spans 243 residues: uncharacterized protein (243 aa).

Positions 1 to 16 are cleaved as a signal peptide; the sequence is MKHFIILFLLLFVTAG. Cys17 is lipidated: N-palmitoyl cysteine. The S-diacylglycerol cysteine moiety is linked to residue Cys17.

It is found in the cell membrane. This is an uncharacterized protein from Bacillus subtilis (strain 168).